The chain runs to 233 residues: Phosphatidylserine decarboxylase proenzyme (233 aa).

Catalysis depends on serine 190, which acts as the Schiff-base intermediate with substrate; via pyruvic acid. Pyruvic acid (Ser); by autocatalysis is present on serine 190.

This sequence belongs to the phosphatidylserine decarboxylase family. PSD-A subfamily. Heterodimer of a large membrane-associated beta subunit and a small pyruvoyl-containing alpha subunit. The cofactor is pyruvate. Is synthesized initially as an inactive proenzyme. Formation of the active enzyme involves a self-maturation process in which the active site pyruvoyl group is generated from an internal serine residue via an autocatalytic post-translational modification. Two non-identical subunits are generated from the proenzyme in this reaction, and the pyruvate is formed at the N-terminus of the alpha chain, which is derived from the carboxyl end of the proenzyme. The post-translation cleavage follows an unusual pathway, termed non-hydrolytic serinolysis, in which the side chain hydroxyl group of the serine supplies its oxygen atom to form the C-terminus of the beta chain, while the remainder of the serine residue undergoes an oxidative deamination to produce ammonia and the pyruvoyl prosthetic group on the alpha chain.

It is found in the cell membrane. The catalysed reaction is a 1,2-diacyl-sn-glycero-3-phospho-L-serine + H(+) = a 1,2-diacyl-sn-glycero-3-phosphoethanolamine + CO2. Its pathway is phospholipid metabolism; phosphatidylethanolamine biosynthesis; phosphatidylethanolamine from CDP-diacylglycerol: step 2/2. Functionally, catalyzes the formation of phosphatidylethanolamine (PtdEtn) from phosphatidylserine (PtdSer). In Xanthobacter autotrophicus (strain ATCC BAA-1158 / Py2), this protein is Phosphatidylserine decarboxylase proenzyme.